The chain runs to 348 residues: Anthranilate phosphoribosyltransferase (348 aa).

5-phospho-alpha-D-ribose 1-diphosphate-binding positions include glycine 87, glycine 90–aspartate 91, threonine 95, asparagine 97–threonine 100, lysine 115–glycine 123, and serine 127. Residue glycine 87 participates in anthranilate binding. Serine 99 contributes to the Mg(2+) binding site. An anthranilate-binding site is contributed by asparagine 118. Arginine 173 lines the anthranilate pocket. Residues aspartate 232 and glutamate 233 each coordinate Mg(2+).

Belongs to the anthranilate phosphoribosyltransferase family. In terms of assembly, homodimer. Mg(2+) is required as a cofactor.

The catalysed reaction is N-(5-phospho-beta-D-ribosyl)anthranilate + diphosphate = 5-phospho-alpha-D-ribose 1-diphosphate + anthranilate. The protein operates within amino-acid biosynthesis; L-tryptophan biosynthesis; L-tryptophan from chorismate: step 2/5. Catalyzes the transfer of the phosphoribosyl group of 5-phosphorylribose-1-pyrophosphate (PRPP) to anthranilate to yield N-(5'-phosphoribosyl)-anthranilate (PRA). This Synechococcus sp. (strain CC9311) protein is Anthranilate phosphoribosyltransferase.